The chain runs to 80 residues: Regulatory protein HrpD6 (80 aa).

Involved in the regulation of several genes of the hrp-hrc-hpa cluster, which encodes a type III secretion system (T3SS). Upregulates the expression of hpa2, hpa1 and hpaB and partially controls the expression of hrcC and hrcT. Controls the secretion of the T3SS TAL effector AvrXa27. Also regulates the expression of several HrpX-regulated protein (Xrp) genes. Has no influence on hrpG or hrpX expression. This is Regulatory protein HrpD6 from Xanthomonas oryzae pv. oryzicola.